A 638-amino-acid polypeptide reads, in one-letter code: MSSCQPPPFLSSMVVRWLSVWIILASSAFASAKCAADYYVRSLPGQPEGPLLKMHAGHIEVDHENNGNLFFWHFQNRHIANRQRTVIWLNGGPGCSSMDGAMMEVGPYRLKDDHTLKYNEGSWDEFANLLFVDQPVGTGYSYANTNSYLHELDEMAAHFVTFMERWFELFPEYEHDDLYFAGESYAGQYIPYIAKAILDRNKNETVIAQRRLWHLKGLLIGNGWFSPVEQYLSYLPYVYKEGMVKNDSDEAKGIERAHSDCVAELDRAKGDVKIHVDVCEKILSAILDVSNKSGHCVNMYDVRLTDTFPSCGMNWPPDLKHLAPYLRRDDVTSALHINKDKKTGWTECAGAVSSSFRPRKSKPSADLLPGLLESGVRIGLFSGAKDLICNHIGTEEFINKMEWSGGKGFELSPGVWAPRRDWTFEGETAGYYQEARNLTYVLFYNASHMVPFDYARRSRDMLDRFLGVDITSIGGNPTDSRIDGEKGALTSVGNHPNSTLAEQREKEKLKAATWKAYYKSGEVALVVVVIAAGAWGFFLWRSRRQRQGSGYLGIYPSLNGLSSGSLPRYRNKRSSRDIEAAAEFEASELETLHDMDDRSPGPSRDNYSVGEDSETEDEKRYPPTDFDRQDGTPSASRT.

Residues 1–32 form the signal peptide; it reads MSSCQPPPFLSSMVVRWLSVWIILASSAFASA. Topologically, residues 33–519 are lumenal; sequence KCAADYYVRS…KAATWKAYYK (487 aa). Residue serine 184 is part of the active site. N-linked (GlcNAc...) asparagine glycans are attached at residues asparagine 203, asparagine 246, and asparagine 291. Aspartate 386 is an active-site residue. N-linked (GlcNAc...) asparagine glycans are attached at residues asparagine 437 and asparagine 445. Histidine 448 is a catalytic residue. The N-linked (GlcNAc...) asparagine glycan is linked to asparagine 497. A helical transmembrane segment spans residues 520–540; it reads SGEVALVVVVIAAGAWGFFLW. At 541 to 638 the chain is on the cytoplasmic side; the sequence is RSRRQRQGSG…QDGTPSASRT (98 aa). The tract at residues 586–638 is disordered; sequence ASELETLHDMDDRSPGPSRDNYSVGEDSETEDEKRYPPTDFDRQDGTPSASRT. 2 stretches are compositionally biased toward basic and acidic residues: residues 590-599 and 617-630; these read ETLHDMDDRS and DEKR…DRQD.

This sequence belongs to the peptidase S10 family.

The protein localises to the golgi apparatus. Its subcellular location is the trans-Golgi network membrane. The catalysed reaction is Preferential release of a C-terminal arginine or lysine residue.. Protease with a carboxypeptidase B-like function involved in the C-terminal processing of the lysine and arginine residues from protein precursors. Promotes cell fusion and is involved in the programmed cell death. The sequence is that of Pheromone-processing carboxypeptidase KEX1 (KEX1) from Uncinocarpus reesii (strain UAMH 1704).